The following is a 182-amino-acid chain: Ribosome-recycling factor (182 aa).

It belongs to the RRF family.

The protein resides in the cytoplasm. Functionally, responsible for the release of ribosomes from messenger RNA at the termination of protein biosynthesis. May increase the efficiency of translation by recycling ribosomes from one round of translation to another. In Prochlorococcus marinus (strain MIT 9215), this protein is Ribosome-recycling factor.